Here is a 284-residue protein sequence, read N- to C-terminus: Nucleotide-binding protein SPO0713 (284 aa).

3-10 is a binding site for ATP; the sequence is GPSGAGRS. A GTP-binding site is contributed by 50–53; sequence DARN.

Belongs to the RapZ-like family.

Functionally, displays ATPase and GTPase activities. The polypeptide is Nucleotide-binding protein SPO0713 (Ruegeria pomeroyi (strain ATCC 700808 / DSM 15171 / DSS-3) (Silicibacter pomeroyi)).